The primary structure comprises 394 residues: S-adenosylmethionine synthase 2 (394 aa).

Glu11 provides a ligand contact to Mg(2+). His17 lines the ATP pocket. A K(+)-binding site is contributed by Glu45. Positions 58 and 101 each coordinate L-methionine. ATP-binding positions include 169 to 171, 237 to 240, Asp248, 254 to 255, Ala271, Lys275, and Lys279; these read DGK, SGRF, and RK. Residue Asp248 participates in L-methionine binding. Residue Lys279 participates in L-methionine binding.

Belongs to the AdoMet synthase family. As to quaternary structure, homotetramer. The cofactor is Mn(2+). Mg(2+) is required as a cofactor. Co(2+) serves as cofactor. It depends on K(+) as a cofactor.

It is found in the cytoplasm. It catalyses the reaction L-methionine + ATP + H2O = S-adenosyl-L-methionine + phosphate + diphosphate. Its pathway is amino-acid biosynthesis; S-adenosyl-L-methionine biosynthesis; S-adenosyl-L-methionine from L-methionine: step 1/1. Catalyzes the formation of S-adenosylmethionine from methionine and ATP. The reaction comprises two steps that are both catalyzed by the same enzyme: formation of S-adenosylmethionine (AdoMet) and triphosphate, and subsequent hydrolysis of the triphosphate. The chain is S-adenosylmethionine synthase 2 (SAM2) from Oryza sativa subsp. japonica (Rice).